A 726-amino-acid chain; its full sequence is Pyrroloquinoline quinone-dependent pyranose dehydrogenase (726 aa).

An N-terminal signal peptide occupies residues 1-18; that stretch reads MRSSSLAWALGLVALANA. Heme b contacts are provided by Met83 and Tyr108. A disulfide bridge links Cys138 with Cys141. N-linked (GlcNAc...) asparagine glycosylation is present at Asn140. Positions 181 and 182 each coordinate heme b. The segment at 211-242 is disordered; the sequence is PPLSGGAPTQPPTQQPPTTTAPPPPPPSSTFV. Residues 219-238 are compositionally biased toward pro residues; sequence TQPPTQQPPTTTAPPPPPPS. Cys244 and Cys302 are joined by a disulfide. Residues Arg273, His363, Arg430, and Asn431 each contribute to the pyrroloquinoline quinone site. Ca(2+)-binding residues include Ser449 and Asp451. Cys492 and Cys525 form a disulfide bridge. His539 serves as a coordination point for pyrroloquinoline quinone. An N-linked (GlcNAc...) asparagine glycan is attached at Asn551. His560, Trp563, and Asn564 together coordinate pyrroloquinoline quinone. A disulfide bond links Cys611 and Cys619. Arg621 provides a ligand contact to pyrroloquinoline quinone. Pro residues predominate over residues 659-678; that stretch reads ITQPPITTSPPTPTTPPVVQ. Residues 659-689 are disordered; sequence ITQPPITTSPPTPTTPPVVQPPTTVAPPQAS. Positions 679–689 are enriched in low complexity; the sequence is PPTTVAPPQAS. Residues 688-724 enclose the CBM1 domain; it reads ASQTLWGQCGGQGWTGPTLCPANSVCRESNQWYSQCV.

This sequence belongs to the sugar dehydrogenase AA12 family. Ca(2+) is required as a cofactor. Pyrroloquinoline quinone serves as cofactor. The cofactor is heme b.

It localises to the secreted. Pyrroloquinoline quinone (PPQ)-dependent oxidoreductase that catalyzes the oxidation of various sugars including L-galactose, L-gulose, D-talose, D-arabinose, D-lyxose, L-fucose and D-glucosone. Shows significant activity toward the reverse-chair conformation of pyranoses. Shows little or no activity toward abundant sugars such as D-glucose, D-fructose, cellobiose, as well L-xylose and L-glucose. This enzyme is able to direct electrical communication with electrodes, without artificial electron mediators, thus allowing direct electron transfer (DET)-type bioelectrocatalysis. Exhibits binding affinity for insoluble cellulose. PDH does not oxidize cello-oligosaccharides but is able to activate the C-1-oxidizing Neurospora crassa LPMO9F and the C-4-oxidizing Neurospora crassa LPMO9C thanks to the electron-tranfer activity of the cytochrome domain and the localization of PDH in the vicinity of the LPMO substrates by the CBM1 domain. The sequence is that of Pyrroloquinoline quinone-dependent pyranose dehydrogenase from Coprinopsis cinerea (strain Okayama-7 / 130 / ATCC MYA-4618 / FGSC 9003) (Inky cap fungus).